The following is a 465-amino-acid chain: Lactaldehyde dehydrogenase (465 aa).

220–225 serves as a coordination point for NAD(+); it reads GSVEVG. Catalysis depends on residues glutamate 240 and cysteine 274.

The protein belongs to the aldehyde dehydrogenase family. In terms of assembly, homotetramer.

It carries out the reaction (S)-lactaldehyde + NAD(+) + H2O = (S)-lactate + NADH + 2 H(+). The protein operates within cofactor biosynthesis; coenzyme F420 biosynthesis. Involved in F420 biosynthesis through the oxidation of lactaldehyde to lactate. This Methanococcus maripaludis (strain DSM 14266 / JCM 13030 / NBRC 101832 / S2 / LL) protein is Lactaldehyde dehydrogenase.